The primary structure comprises 296 residues: NAD kinase (296 aa).

Residue D72 is the Proton acceptor of the active site. NAD(+)-binding positions include D72 to G73, N146 to D147, R157, K174, D176, T187 to S192, and Q247.

This sequence belongs to the NAD kinase family. The cofactor is a divalent metal cation.

Its subcellular location is the cytoplasm. The enzyme catalyses NAD(+) + ATP = ADP + NADP(+) + H(+). In terms of biological role, involved in the regulation of the intracellular balance of NAD and NADP, and is a key enzyme in the biosynthesis of NADP. Catalyzes specifically the phosphorylation on 2'-hydroxyl of the adenosine moiety of NAD to yield NADP. This chain is NAD kinase, found in Pseudomonas fluorescens (strain Pf0-1).